We begin with the raw amino-acid sequence, 182 residues long: Ribosome maturation factor RimM (182 aa).

Positions 102 to 182 (EEGDYYWKDL…SIEVDWDPGF (81 aa)) constitute a PRC barrel domain.

Belongs to the RimM family. Binds ribosomal protein uS19.

It is found in the cytoplasm. An accessory protein needed during the final step in the assembly of 30S ribosomal subunit, possibly for assembly of the head region. Essential for efficient processing of 16S rRNA. May be needed both before and after RbfA during the maturation of 16S rRNA. It has affinity for free ribosomal 30S subunits but not for 70S ribosomes. The sequence is that of Ribosome maturation factor RimM from Escherichia fergusonii (strain ATCC 35469 / DSM 13698 / CCUG 18766 / IAM 14443 / JCM 21226 / LMG 7866 / NBRC 102419 / NCTC 12128 / CDC 0568-73).